The sequence spans 346 residues: Annexin A1 (346 aa).

N-acetylalanine is present on Ala2. Ser5 is modified (phosphoserine; by TRPM7). Residue Gln19 forms an Isoglutamyl lysine isopeptide (Gln-Lys) (interchain with K-?) linkage. Position 21 is a phosphotyrosine (Tyr21). Ser27 carries the phosphoserine; by PKC modification. Ser34 and Ser37 each carry phosphoserine. Annexin repeat units follow at residues 42–113 (FNVS…AMLK), 114–185 (TPAQ…ALAK), 197–269 (DLAD…TIVK), and 273–344 (STPA…ALCG). Lys58 is subject to N6-acetyllysine. 11 residues coordinate Ca(2+): Gly59, Val60, Glu62, Arg97, Leu100, Glu105, Met127, Gly129, Gly131, Thr132, and Glu134. Position 136 is a phosphothreonine (Thr136). Ca(2+) contacts are provided by Asp171, Gly210, and Arg213. Lys214 is covalently cross-linked (Glycyl lysine isopeptide (Lys-Gly) (interchain with G-Cter in SUMO1); alternate). Residue Lys214 forms a Glycyl lysine isopeptide (Lys-Gly) (interchain with G-Cter in SUMO2); alternate linkage. Ca(2+) contacts are provided by Gly215, Asp253, Glu255, and Leu256. A Glycyl lysine isopeptide (Lys-Gly) (interchain with G-Cter in SUMO1) cross-link involves residue Lys257. Glu261, Met286, Gly288, and Gly290 together coordinate Ca(2+). Lys312 is subject to N6-acetyllysine. Cys324 and Cys343 are disulfide-bonded. Residues Leu328, Glu330, and Thr331 each coordinate Ca(2+). Lys332 is covalently cross-linked (Glycyl lysine isopeptide (Lys-Gly) (interchain with G-Cter in SUMO1)). Glu336 serves as a coordination point for Ca(2+).

The protein belongs to the annexin family. As to quaternary structure, homodimer; non-covalently linked. Homodimer; linked by transglutamylation. Homodimers linked by transglutamylation are observed in placenta, but not in other tissues. Interacts with S100A11. Heterotetramer, formed by two molecules each of S100A11 and ANXA1. Interacts with DYSF. Interacts with EGFR. Phosphorylated by protein kinase C, EGFR and TRPM7. Phosphorylated in response to EGF treatment. In terms of processing, sumoylated. Post-translationally, proteolytically cleaved by cathepsin CTSG to release the active N-terminal peptide Ac2-26. Detected in lung. Detected at the apical membrane of airway epithelial cells. Detected in intestinal epithelial cells. Detected in skeletal muscle. Detected in prostate. Detected in thymus (at protein level). Detected in stomach, lung, spleen, ovary and uterus, and at lower levels in kidney, thymus and heart.

Its subcellular location is the nucleus. The protein resides in the cytoplasm. The protein localises to the cell projection. It is found in the cilium. It localises to the basolateral cell membrane. Its subcellular location is the lateral cell membrane. The protein resides in the cell membrane. The protein localises to the apical cell membrane. It is found in the membrane. It localises to the early endosome. Its subcellular location is the cytoplasmic vesicle membrane. The protein resides in the endosome membrane. The protein localises to the secreted. It is found in the extracellular space. It localises to the extracellular exosome. Its subcellular location is the cytoplasmic vesicle. The protein resides in the secretory vesicle lumen. The protein localises to the phagocytic cup. Its function is as follows. Plays important roles in the innate immune response as effector of glucocorticoid-mediated responses and regulator of the inflammatory process. Has anti-inflammatory activity. Plays a role in glucocorticoid-mediated down-regulation of the early phase of the inflammatory response. Contributes to the adaptive immune response by enhancing signaling cascades that are triggered by T-cell activation, regulates differentiation and proliferation of activated T-cells. Promotes the differentiation of T-cells into Th1 cells and negatively regulates differentiation into Th2 cells. Has no effect on unstimulated T-cells. Negatively regulates hormone exocytosis via activation of the formyl peptide receptors and reorganization of the actin cytoskeleton. Has high affinity for Ca(2+) and can bind up to eight Ca(2+) ions. Displays Ca(2+)-dependent binding to phospholipid membranes. Plays a role in the formation of phagocytic cups and phagosomes. Plays a role in phagocytosis by mediating the Ca(2+)-dependent interaction between phagosomes and the actin cytoskeleton. Functionally, functions at least in part by activating the formyl peptide receptors and downstream signaling cascades. Promotes chemotaxis of granulocytes and monocytes via activation of the formyl peptide receptors. Promotes rearrangement of the actin cytoskeleton, cell polarization and cell migration. Promotes resolution of inflammation and wound healing. Acts via neutrophil N-formyl peptide receptors to enhance the release of CXCL2. The protein is Annexin A1 (Anxa1) of Mus musculus (Mouse).